Reading from the N-terminus, the 372-residue chain is MHSVIHASDRIVVKVGSSLVTNDGRGLDLNALARWAEEVAELKRRGKQVVLVSSGAIAEGCQRLGWTVRPKGVHELQAAAAVGQMGLCQAYESAFRSFGLRTAQILLTHEDLADRTRYLNARSTLTSLLNLNVVPIINENDTVATSEIRFGDNDTLGALVTNLIEADALVILTDQRGLYSADPRKHPDAEFIHQAEAGDERLEDMAGGAGSSVGTGGMITKILAAKRAARSGAATVIASGREPHVLSRLADGEAIGTQLVAATNRMAARKQWLADHLKLAGRLLLDDGAALAIRERGTSLLPVGVSAVEGDFLRGEAVACVDAAGHEVARGLVNYSSDEARQIMRKSTREIEAALGYIVEPELIHRDNMVAL.

Lysine 14 contributes to the ATP binding site. Substrate-binding residues include serine 54, aspartate 141, and asparagine 153. ATP contacts are provided by residues 173-174 (TD) and 215-221 (TGGMITK). The region spanning 280–358 (AGRLLLDDGA…REIEAALGYI (79 aa)) is the PUA domain.

The protein belongs to the glutamate 5-kinase family.

The protein localises to the cytoplasm. The enzyme catalyses L-glutamate + ATP = L-glutamyl 5-phosphate + ADP. It participates in amino-acid biosynthesis; L-proline biosynthesis; L-glutamate 5-semialdehyde from L-glutamate: step 1/2. Its function is as follows. Catalyzes the transfer of a phosphate group to glutamate to form L-glutamate 5-phosphate. The polypeptide is Glutamate 5-kinase (Chromobacterium violaceum (strain ATCC 12472 / DSM 30191 / JCM 1249 / CCUG 213 / NBRC 12614 / NCIMB 9131 / NCTC 9757 / MK)).